The chain runs to 115 residues: Potassium-transporting ATPase potassium-binding subunit (115 aa).

Helical transmembrane passes span 8 to 28 (YFLLLIVIAVPLGKYLYVAFF) and 60 to 80 (SYCTALLIVNAALLGISYGLL).

Belongs to the KdpA family. The system is composed of three essential subunits: KdpA, KdpB and KdpC.

It is found in the cell membrane. Part of the high-affinity ATP-driven potassium transport (or Kdp) system, which catalyzes the hydrolysis of ATP coupled with the electrogenic transport of potassium into the cytoplasm. This subunit binds the extracellular potassium ions and delivers the ions to the membrane domain of KdpB through an intramembrane tunnel. The chain is Potassium-transporting ATPase potassium-binding subunit from Geobacillus stearothermophilus (Bacillus stearothermophilus).